The chain runs to 142 residues: Hemoglobin subunit alpha-B (142 aa).

Residues 2–142 (VLSPTDKSNV…VSTVLTSKYR (141 aa)) form the Globin domain. Histidine 59 lines the O2 pocket. A heme b-binding site is contributed by histidine 88.

This sequence belongs to the globin family. Heterotetramer of two alpha chains and two beta chains. Red blood cells.

Its function is as follows. Involved in oxygen transport from the lung to the various peripheral tissues. In Otolemur crassicaudatus (Brown greater galago), this protein is Hemoglobin subunit alpha-B (HBAB).